A 139-amino-acid polypeptide reads, in one-letter code: Endocuticle structural glycoprotein SgAbd-8 (139 aa).

Glutamine 1 is modified (pyrrolidone carboxylic acid). Threonine 14 carries an O-linked (HexNAc...) threonine glycan. The O-linked (HexNAc...) serine glycan is linked to serine 15. The Chitin-binding type R&amp;R domain occupies 29-99 (DGSYAWSYET…PEGAHLPTPP (71 aa)). Threonine 97 carries an O-linked (HexNAc...) threonine glycan. The interval 111 to 139 (FIASQPQQPGNNGGGQFPRPQPFPRPGAF) is disordered. The segment covering 129–139 (RPQPFPRPGAF) has biased composition (pro residues).

Component of the abdominal endocuticle. This is Endocuticle structural glycoprotein SgAbd-8 from Schistocerca gregaria (Desert locust).